A 469-amino-acid polypeptide reads, in one-letter code: Trehalose-6-phosphate synthase (469 aa).

Residue Arg10 participates in D-glucose 6-phosphate binding. Position 22–23 (22–23 (GG)) interacts with UDP-alpha-D-glucose. The D-glucose 6-phosphate site is built by Tyr77 and Asp131. UDP-alpha-D-glucose contacts are provided by Arg262 and Lys267. A D-glucose 6-phosphate-binding site is contributed by Arg300. 365–369 (LVAKE) is a binding site for UDP-alpha-D-glucose.

This sequence belongs to the glycosyltransferase 20 family. As to quaternary structure, homotetramer.

The catalysed reaction is D-glucose 6-phosphate + UDP-alpha-D-glucose = alpha,alpha-trehalose 6-phosphate + UDP + H(+). The protein operates within glycan biosynthesis; trehalose biosynthesis. Probably involved in the osmoprotection via the biosynthesis of trehalose. Catalyzes the transfer of glucose from UDP-alpha-D-glucose (UDP-Glc) to D-glucose 6-phosphate (Glc-6-P) to form trehalose-6-phosphate. Acts with retention of the anomeric configuration of the UDP-sugar donor. This chain is Trehalose-6-phosphate synthase, found in Sodalis glossinidius (strain morsitans).